Reading from the N-terminus, the 542-residue chain is Putative cysteine ligase BshC (542 aa).

A coiled-coil region spans residues 458–487; it reads VAKNAAIIQAQIEFLQQTLERALLSKHEVE.

Belongs to the BshC family.

Its function is as follows. Involved in bacillithiol (BSH) biosynthesis. May catalyze the last step of the pathway, the addition of cysteine to glucosamine malate (GlcN-Mal) to generate BSH. This Geobacillus thermodenitrificans (strain NG80-2) protein is Putative cysteine ligase BshC.